Consider the following 437-residue polypeptide: Ribosomal protein uS12 methylthiotransferase RimO (437 aa).

The MTTase N-terminal domain maps to 4–114 (PRVSFVSLGC…VMSAVHEAVP (111 aa)). [4Fe-4S] cluster-binding residues include Cys-13, Cys-49, Cys-78, Cys-145, Cys-149, and Cys-152. The Radical SAM core domain maps to 131–369 (LTPRHYAYLK…MAKQQQISTN (239 aa)). In terms of domain architecture, TRAM spans 372 to 437 (KKKVGKRLPV…DAYDLHGIAV (66 aa)).

Belongs to the methylthiotransferase family. RimO subfamily. It depends on [4Fe-4S] cluster as a cofactor.

The protein resides in the cytoplasm. The enzyme catalyses L-aspartate(89)-[ribosomal protein uS12]-hydrogen + (sulfur carrier)-SH + AH2 + 2 S-adenosyl-L-methionine = 3-methylsulfanyl-L-aspartate(89)-[ribosomal protein uS12]-hydrogen + (sulfur carrier)-H + 5'-deoxyadenosine + L-methionine + A + S-adenosyl-L-homocysteine + 2 H(+). Its function is as follows. Catalyzes the methylthiolation of an aspartic acid residue of ribosomal protein uS12. The chain is Ribosomal protein uS12 methylthiotransferase RimO from Brucella anthropi (strain ATCC 49188 / DSM 6882 / CCUG 24695 / JCM 21032 / LMG 3331 / NBRC 15819 / NCTC 12168 / Alc 37) (Ochrobactrum anthropi).